The primary structure comprises 31 residues: AACYSSDCRVKCRAMGFSSGKCIDSKCKCYK.

3 disulfide bridges follow: cysteine 3–cysteine 22, cysteine 8–cysteine 27, and cysteine 12–cysteine 29.

The protein belongs to the short scorpion toxin superfamily. Potassium channel inhibitor family. Alpha-KTx 19 subfamily. As to quaternary structure, monomer. In terms of tissue distribution, expressed by the venom gland.

It localises to the secreted. Blocks voltage-gated potassium channels rKv1.1/KCNA1, rKv1.2/KCNA2, hKv1.3/KCNA3, rKv1.6/KCNA6 (IC(50)=75.9 nM) and, to a lesser extent, Shaker IR (with the inactivation domain removed). This chain is Potassium channel toxin alpha-KTx 19.2, found in Buthus occitanus tunetanus (Common European scorpion).